The sequence spans 122 residues: Large ribosomal subunit protein bL12 (122 aa).

The protein belongs to the bacterial ribosomal protein bL12 family. As to quaternary structure, homodimer. Part of the ribosomal stalk of the 50S ribosomal subunit. Forms a multimeric L10(L12)X complex, where L10 forms an elongated spine to which 2 to 4 L12 dimers bind in a sequential fashion. Binds GTP-bound translation factors.

Its function is as follows. Forms part of the ribosomal stalk which helps the ribosome interact with GTP-bound translation factors. Is thus essential for accurate translation. The sequence is that of Large ribosomal subunit protein bL12 from Clostridium botulinum (strain 657 / Type Ba4).